Here is a 936-residue protein sequence, read N- to C-terminus: Lon protease homolog, mitochondrial (936 aa).

Residues 1–40 (MYATRAIARRLERHAARCKGAHVARAVRGARARTTSAPRA) constitute a mitochondrion transit peptide. The interval 65–95 (AFVSSVDGDGSTGSTGSSSSSSSSAFGDSAS) is disordered. Residues 66–95 (FVSSVDGDGSTGSTGSSSSSSSSAFGDSAS) show a composition bias toward low complexity. The Lon N-terminal domain maps to 112-352 (VLAVPLPRRP…ATLELLKKEV (241 aa)). 507–514 (GPPGVGKT) provides a ligand contact to ATP. In terms of domain architecture, Lon proteolytic spans 748–932 (VTPPGVVTGL…DEVYRQALDW (185 aa)). Active-site residues include S838 and K881.

Belongs to the peptidase S16 family. Homohexamer or homoheptamer. Organized in a ring with a central cavity.

Its subcellular location is the mitochondrion matrix. The enzyme catalyses Hydrolysis of proteins in presence of ATP.. In terms of biological role, ATP-dependent serine protease that mediates the selective degradation of misfolded, unassembled or oxidatively damaged polypeptides as well as certain short-lived regulatory proteins in the mitochondrial matrix. May also have a chaperone function in the assembly of inner membrane protein complexes. Participates in the regulation of mitochondrial gene expression and in the maintenance of the integrity of the mitochondrial genome. Binds to mitochondrial DNA in a site-specific manner. The protein is Lon protease homolog, mitochondrial of Ostreococcus lucimarinus (strain CCE9901).